We begin with the raw amino-acid sequence, 256 residues long: Ubiquinone/menaquinone biosynthesis C-methyltransferase UbiE (256 aa).

Residues 1–19 show a composition bias toward polar residues; it reads MQNRSSSPDSSSAGNTHFG. Residues 1-24 form a disordered region; sequence MQNRSSSPDSSSAGNTHFGFQSVP. S-adenosyl-L-methionine contacts are provided by residues T81, D102, and 128-129; that span reads DA.

The protein belongs to the class I-like SAM-binding methyltransferase superfamily. MenG/UbiE family.

The catalysed reaction is a 2-demethylmenaquinol + S-adenosyl-L-methionine = a menaquinol + S-adenosyl-L-homocysteine + H(+). The enzyme catalyses a 2-methoxy-6-(all-trans-polyprenyl)benzene-1,4-diol + S-adenosyl-L-methionine = a 5-methoxy-2-methyl-3-(all-trans-polyprenyl)benzene-1,4-diol + S-adenosyl-L-homocysteine + H(+). It functions in the pathway quinol/quinone metabolism; menaquinone biosynthesis; menaquinol from 1,4-dihydroxy-2-naphthoate: step 2/2. It participates in cofactor biosynthesis; ubiquinone biosynthesis. Methyltransferase required for the conversion of demethylmenaquinol (DMKH2) to menaquinol (MKH2) and the conversion of 2-polyprenyl-6-methoxy-1,4-benzoquinol (DDMQH2) to 2-polyprenyl-3-methyl-6-methoxy-1,4-benzoquinol (DMQH2). This is Ubiquinone/menaquinone biosynthesis C-methyltransferase UbiE from Bordetella avium (strain 197N).